Consider the following 340-residue polypeptide: Glycerol-3-phosphate dehydrogenase [NAD(P)+] (340 aa).

Positions 11, 12, 33, and 106 each coordinate NADPH. 3 residues coordinate sn-glycerol 3-phosphate: lysine 106, glycine 137, and serine 139. Alanine 141 serves as a coordination point for NADPH. Lysine 192, aspartate 245, serine 255, arginine 256, and asparagine 257 together coordinate sn-glycerol 3-phosphate. The active-site Proton acceptor is the lysine 192. Residue arginine 256 coordinates NADPH. NADPH contacts are provided by valine 280 and glutamate 282.

Belongs to the NAD-dependent glycerol-3-phosphate dehydrogenase family.

The protein localises to the cytoplasm. The catalysed reaction is sn-glycerol 3-phosphate + NAD(+) = dihydroxyacetone phosphate + NADH + H(+). It catalyses the reaction sn-glycerol 3-phosphate + NADP(+) = dihydroxyacetone phosphate + NADPH + H(+). It functions in the pathway membrane lipid metabolism; glycerophospholipid metabolism. Functionally, catalyzes the reduction of the glycolytic intermediate dihydroxyacetone phosphate (DHAP) to sn-glycerol 3-phosphate (G3P), the key precursor for phospholipid synthesis. The sequence is that of Glycerol-3-phosphate dehydrogenase [NAD(P)+] from Bacillus cereus (strain ATCC 10987 / NRS 248).